The primary structure comprises 269 residues: 5'-nucleotidase SurE (269 aa).

A divalent metal cation-binding residues include Asp-11, Asp-12, Ser-43, and Asn-101.

It belongs to the SurE nucleotidase family. It depends on a divalent metal cation as a cofactor.

It localises to the cytoplasm. The catalysed reaction is a ribonucleoside 5'-phosphate + H2O = a ribonucleoside + phosphate. Its function is as follows. Nucleotidase that shows phosphatase activity on nucleoside 5'-monophosphates. This chain is 5'-nucleotidase SurE, found in Prochlorococcus marinus (strain MIT 9515).